Consider the following 1112-residue polypeptide: Patronin (microtubule-binding protein) homolog (1112 aa).

Residues 165–286 (IDSVDALLFW…VNAFLADLFV (122 aa)) form the Calponin-homology (CH) domain. 4 disordered regions span residues 324–358 (AARS…SRMS), 485–504 (EGED…QPSV), 542–566 (MQQQ…PSQL), and 788–834 (NHSE…GSGE). Composition is skewed to polar residues over residues 345 to 358 (SHSQ…SRMS) and 489 to 504 (GTQS…QPSV). Residues 542–557 (MQQQMQQQQQQQAQAQ) are compositionally biased toward low complexity. Basic and acidic residues predominate over residues 802-816 (QNDRDDLSTGRKSDD). A coiled-coil region spans residues 850-914 (ALIAKTMKRK…YKRKKLEKEL (65 aa)). The tract at residues 916–965 (AELSARSTGRGHSQPPFIRTKSQMSEVTESSRQNTPRMRGQSSVEQRVSV) is disordered. The segment covering 935-951 (TKSQMSEVTESSRQNTP) has biased composition (polar residues). The span at 956-965 (QSSVEQRVSV) shows a compositional bias: low complexity. Positions 972–1109 (THKLYAKTVT…RIPHSGTPAH (138 aa)) constitute a CKK domain.

Belongs to the CAMSAP1 family. As to quaternary structure, interacts with dapk-1. In terms of tissue distribution, expressed in larval and adult epidermis, intestine and pharynx. Broadly expressed in the nervous system. Expressed in body wall muscle cells.

Its subcellular location is the cell projection. The protein resides in the axon. It is found in the dendrite. It localises to the cell membrane. The protein localises to the sarcolemma. Its subcellular location is the cytoplasm. The protein resides in the cytosol. It is found in the cytoskeleton. It localises to the perikaryon. Its function is as follows. Required for microtubule stability and anchorage by binding to the minus ends of microtubules. Acts redundantly with noca-1 to control circumferential microtubule assembly along the body which is necessary for larval development, viability, morphology and integrity of the epidermis. Promotes microtubule stability and polymerization in neurons. Involved in the maintenance of neurite morphology in ALM and PLM neurons. May play a role in synaptic protein localization in the PLM neuron. May act upstream of dlk-1 in neuronal regeneration. Plays a role in postembryonic epidermal tissue integrity and wound healing. This chain is Patronin (microtubule-binding protein) homolog, found in Caenorhabditis elegans.